The sequence spans 490 residues: Cytochrome P450 2C14 (490 aa).

Cysteine 435 lines the heme pocket.

This sequence belongs to the cytochrome P450 family. The cofactor is heme.

The protein localises to the endoplasmic reticulum membrane. It localises to the microsome membrane. The catalysed reaction is an organic molecule + reduced [NADPH--hemoprotein reductase] + O2 = an alcohol + oxidized [NADPH--hemoprotein reductase] + H2O + H(+). Cytochromes P450 are a group of heme-thiolate monooxygenases. In liver microsomes, this enzyme is involved in an NADPH-dependent electron transport pathway. It oxidizes a variety of structurally unrelated compounds, including steroids, fatty acids, and xenobiotics. This chain is Cytochrome P450 2C14 (CYP2C14), found in Oryctolagus cuniculus (Rabbit).